A 246-amino-acid polypeptide reads, in one-letter code: 23S rRNA (guanosine-2'-O-)-methyltransferase RlmB (246 aa).

S-adenosyl-L-methionine contacts are provided by G197, I217, and L226.

This sequence belongs to the class IV-like SAM-binding methyltransferase superfamily. RNA methyltransferase TrmH family. RlmB subfamily.

The protein localises to the cytoplasm. It carries out the reaction guanosine(2251) in 23S rRNA + S-adenosyl-L-methionine = 2'-O-methylguanosine(2251) in 23S rRNA + S-adenosyl-L-homocysteine + H(+). Functionally, specifically methylates the ribose of guanosine 2251 in 23S rRNA. This is 23S rRNA (guanosine-2'-O-)-methyltransferase RlmB from Haemophilus ducreyi (strain 35000HP / ATCC 700724).